We begin with the raw amino-acid sequence, 225 residues long: F-box protein SKIP27 (225 aa).

The F-box domain maps to 121 to 169 (KSRLECLPQDLLIRVICGVDHEDLKSLKLVSKSIREASLVAKTLHFAYT).

Part of a SCF (ASK-cullin-F-box) protein ligase complex. Interacts with SKP1A/ASK1 and SPK1B/ASK2.

The protein localises to the nucleus. It functions in the pathway protein modification; protein ubiquitination. Component of SCF(ASK-cullin-F-box) E3 ubiquitin ligase complexes, which may mediate the ubiquitination and subsequent proteasomal degradation of target proteins. The sequence is that of F-box protein SKIP27 (SKIP27) from Arabidopsis thaliana (Mouse-ear cress).